Here is a 3227-residue protein sequence, read N- to C-terminus: E3 ubiquitin-protein ligase ptr1 (3227 aa).

4 disordered regions span residues 1806-1836, 1869-1894, 1908-1929, and 2577-2607; these read SGAAQDSMGDQSLSSSSEESSDSDREEPPDL, MEFEDDQSGSADSVVSEDDADDVMYS, QDASSQNDDSSFDEASSHGDVI, and ATTGYTNDQDSRGSTVPKQDPGTTASRKDKK. The span at 1811 to 1823 shows a compositional bias: low complexity; it reads DSMGDQSLSSSSE. The span at 1883–1894 shows a compositional bias: acidic residues; it reads VSEDDADDVMYS. The segment covering 2577–2601 has biased composition (polar residues); it reads ATTGYTNDQDSRGSTVPKQDPGTTA. In terms of domain architecture, HECT spans 2891-3227; it reads DADEVKFSKL…NEGSEGFGFA (337 aa). The active-site Glycyl thioester intermediate is the C3194.

This sequence belongs to the UPL family. TOM1/PTR1 subfamily.

It is found in the nucleus. It carries out the reaction S-ubiquitinyl-[E2 ubiquitin-conjugating enzyme]-L-cysteine + [acceptor protein]-L-lysine = [E2 ubiquitin-conjugating enzyme]-L-cysteine + N(6)-ubiquitinyl-[acceptor protein]-L-lysine.. It functions in the pathway protein modification; protein ubiquitination. Its function is as follows. Probable ubiquitin ligase protein involved in mRNA export. E3 ubiquitin ligase proteins mediate ubiquitination and subsequent proteasomal degradation of target proteins. Probably participates in mRNA export from the nucleus by regulating the transport of hnRNP proteins such as rae1. In Schizosaccharomyces pombe (strain 972 / ATCC 24843) (Fission yeast), this protein is E3 ubiquitin-protein ligase ptr1 (ptr1).